A 258-amino-acid chain; its full sequence is Acyl-[acyl-carrier-protein]--UDP-N-acetylglucosamine O-acyltransferase (258 aa).

Belongs to the transferase hexapeptide repeat family. LpxA subfamily. In terms of assembly, homotrimer.

It is found in the cytoplasm. It carries out the reaction a (3R)-hydroxyacyl-[ACP] + UDP-N-acetyl-alpha-D-glucosamine = a UDP-3-O-[(3R)-3-hydroxyacyl]-N-acetyl-alpha-D-glucosamine + holo-[ACP]. It participates in glycolipid biosynthesis; lipid IV(A) biosynthesis; lipid IV(A) from (3R)-3-hydroxytetradecanoyl-[acyl-carrier-protein] and UDP-N-acetyl-alpha-D-glucosamine: step 1/6. In terms of biological role, involved in the biosynthesis of lipid A, a phosphorylated glycolipid that anchors the lipopolysaccharide to the outer membrane of the cell. The protein is Acyl-[acyl-carrier-protein]--UDP-N-acetylglucosamine O-acyltransferase of Pseudomonas putida (strain W619).